The following is a 384-amino-acid chain: L-type lectin-like domain-containing protein C4F6.05c (384 aa).

An N-terminal signal peptide occupies residues 1–19 (MKFCSLFHVLSFCCTLAYA). An L-type lectin-like domain is found at 20–224 (VPKSQFLQLH…DLVALSNLNI (205 aa)). Topologically, residues 20 to 353 (VPKSQFLQLH…AMGNAYSPYN (334 aa)) are extracellular. The disordered stretch occupies residues 227 to 251 (PDTSNNENLNPTSNTKQSVGDNTSP). Residues 354–374 (LTNFMVFLLLGAIVSYGIMLV) traverse the membrane as a helical segment. The Cytoplasmic segment spans residues 375–384 (RRDRRRHKYL).

It is found in the membrane. It localises to the endoplasmic reticulum. The protein localises to the golgi apparatus. This chain is L-type lectin-like domain-containing protein C4F6.05c, found in Schizosaccharomyces pombe (strain 972 / ATCC 24843) (Fission yeast).